The primary structure comprises 87 residues: Small ribosomal subunit protein bS20 (87 aa).

Residues 1-26 form a disordered region; sequence MANHKSAIKRHKQSQKRAARNRAAKT.

This sequence belongs to the bacterial ribosomal protein bS20 family.

In terms of biological role, binds directly to 16S ribosomal RNA. The sequence is that of Small ribosomal subunit protein bS20 from Nitratidesulfovibrio vulgaris (strain DSM 19637 / Miyazaki F) (Desulfovibrio vulgaris).